The chain runs to 811 residues: Elongation factor G, mitochondrial (811 aa).

The N-terminal 64 residues, 1–64 (MSAIARAAAR…FQQSFQRRWA (64 aa)), are a transit peptide targeting the mitochondrion. A tr-type G domain is found at 96-394 (RRQRNVGISA…GVCAYLPNPS (299 aa)). GTP is bound by residues 105–112 (AHIDSGKT), 192–196 (DTPGH), and 246–249 (NKMD).

This sequence belongs to the TRAFAC class translation factor GTPase superfamily. Classic translation factor GTPase family. EF-G/EF-2 subfamily.

The protein localises to the mitochondrion. Its pathway is protein biosynthesis; polypeptide chain elongation. Functionally, mitochondrial GTPase that catalyzes the GTP-dependent ribosomal translocation step during translation elongation. During this step, the ribosome changes from the pre-translocational (PRE) to the post-translocational (POST) state as the newly formed A-site-bound peptidyl-tRNA and P-site-bound deacylated tRNA move to the P and E sites, respectively. Catalyzes the coordinated movement of the two tRNA molecules, the mRNA and conformational changes in the ribosome. The polypeptide is Elongation factor G, mitochondrial (Cryptococcus neoformans var. neoformans serotype D (strain JEC21 / ATCC MYA-565) (Filobasidiella neoformans)).